A 707-amino-acid chain; its full sequence is Elongation factor G (707 aa).

A tr-type G domain is found at H9–E293. GTP-binding positions include A18–T25, D90–H94, and N144–D147.

Belongs to the TRAFAC class translation factor GTPase superfamily. Classic translation factor GTPase family. EF-G/EF-2 subfamily.

It is found in the cytoplasm. Catalyzes the GTP-dependent ribosomal translocation step during translation elongation. During this step, the ribosome changes from the pre-translocational (PRE) to the post-translocational (POST) state as the newly formed A-site-bound peptidyl-tRNA and P-site-bound deacylated tRNA move to the P and E sites, respectively. Catalyzes the coordinated movement of the two tRNA molecules, the mRNA and conformational changes in the ribosome. The chain is Elongation factor G from Bifidobacterium longum (strain DJO10A).